Here is a 2178-residue protein sequence, read N- to C-terminus: DNA-directed RNA polymerase subunit beta (2178 aa).

Insert regions lie at residues 269–325 (SKKI…TPFV), 714–1508 (KRID…LFYN), and 1703–1900 (KGND…LQPM).

Belongs to the RNA polymerase beta chain family. In terms of assembly, in plastids the minimal PEP RNA polymerase catalytic core is composed of four subunits: alpha, beta, beta', and beta''. When a (nuclear-encoded) sigma factor is associated with the core the holoenzyme is formed, which can initiate transcription.

Its subcellular location is the plastid. It is found in the chloroplast. The enzyme catalyses RNA(n) + a ribonucleoside 5'-triphosphate = RNA(n+1) + diphosphate. In terms of biological role, DNA-dependent RNA polymerase catalyzes the transcription of DNA into RNA using the four ribonucleoside triphosphates as substrates. This chain is DNA-directed RNA polymerase subunit beta, found in Tupiella akineta (Green alga).